Reading from the N-terminus, the 378-residue chain is S-adenosylmethionine synthase (378 aa).

ATP is bound at residue His-15. Residue Asp-17 participates in Mg(2+) binding. Residue Glu-43 participates in K(+) binding. The L-methionine site is built by Glu-56 and Gln-99. A flexible loop region spans residues Gln-99 to Arg-109. ATP-binding positions include Asp-164 to Lys-166, Arg-230 to Phe-231, Asp-239, Arg-245 to Lys-246, Ala-262, and Lys-266. Asp-239 is an L-methionine binding site. Lys-270 lines the L-methionine pocket.

It belongs to the AdoMet synthase family. In terms of assembly, homotetramer; dimer of dimers. It depends on Mg(2+) as a cofactor. The cofactor is K(+).

The protein resides in the cytoplasm. The catalysed reaction is L-methionine + ATP + H2O = S-adenosyl-L-methionine + phosphate + diphosphate. It functions in the pathway amino-acid biosynthesis; S-adenosyl-L-methionine biosynthesis; S-adenosyl-L-methionine from L-methionine: step 1/1. Its function is as follows. Catalyzes the formation of S-adenosylmethionine (AdoMet) from methionine and ATP. The overall synthetic reaction is composed of two sequential steps, AdoMet formation and the subsequent tripolyphosphate hydrolysis which occurs prior to release of AdoMet from the enzyme. This is S-adenosylmethionine synthase from Buchnera aphidicola subsp. Acyrthosiphon pisum (strain 5A).